The sequence spans 102 residues: Aspartyl/glutamyl-tRNA(Asn/Gln) amidotransferase subunit C (102 aa).

Belongs to the GatC family. In terms of assembly, heterotrimer of A, B and C subunits.

The enzyme catalyses L-glutamyl-tRNA(Gln) + L-glutamine + ATP + H2O = L-glutaminyl-tRNA(Gln) + L-glutamate + ADP + phosphate + H(+). The catalysed reaction is L-aspartyl-tRNA(Asn) + L-glutamine + ATP + H2O = L-asparaginyl-tRNA(Asn) + L-glutamate + ADP + phosphate + 2 H(+). In terms of biological role, allows the formation of correctly charged Asn-tRNA(Asn) or Gln-tRNA(Gln) through the transamidation of misacylated Asp-tRNA(Asn) or Glu-tRNA(Gln) in organisms which lack either or both of asparaginyl-tRNA or glutaminyl-tRNA synthetases. The reaction takes place in the presence of glutamine and ATP through an activated phospho-Asp-tRNA(Asn) or phospho-Glu-tRNA(Gln). In Bordetella pertussis (strain Tohama I / ATCC BAA-589 / NCTC 13251), this protein is Aspartyl/glutamyl-tRNA(Asn/Gln) amidotransferase subunit C.